The sequence spans 880 residues: Guanine nucleotide-binding protein subunit beta 2 (880 aa).

Position 24 is a phosphoserine (Ser-24). Kelch repeat units lie at residues 291 to 339 (NIYI…MVNN), 377 to 425 (HIFF…KIDI), and 501 to 552 (TVII…LTPS). The interval 624-649 (FNSGSAAQESPKAGASASSASAASFD) is disordered. Residues 638 to 647 (ASASSASAAS) show a composition bias toward low complexity. The stretch at 691–738 (TVVLHGGSNGLNVLDDMWLMDLECETWTPIETFAKADSSEDGDEKLDS) is one Kelch 4 repeat.

G proteins are composed of 3 units, alpha, beta and gamma. GPB1 interacts with the alpha subunit GPA2.

Its subcellular location is the cytoplasm. It localises to the mitochondrion. In terms of biological role, beta subunit of a guanine nucleotide-binding protein (G protein). G proteins are involved as modulators or transducers in various transmembrane signaling systems. The beta and gamma chains are required for the GTPase activity, for replacement of GDP by GTP, and for G protein-effector interaction. Involved in the determination of the cAMP level according to nutritional conditions, most probably as a regulator of cAMP phosphodiesterase. Required for the control of pseudohyphal and haploid invasive growth. The chain is Guanine nucleotide-binding protein subunit beta 2 (GPB2) from Saccharomyces cerevisiae (strain ATCC 204508 / S288c) (Baker's yeast).